Consider the following 367-residue polypeptide: Cystinosin (367 aa).

Positions 1–22 (MIRRWLVIFILFPLQLIEKCES) are cleaved as a signal peptide. The Lumenal segment spans residues 23 to 125 (TVDFSVPPIV…LVIHSNIVSI (103 aa)). N-linked (GlcNAc...) asparagine glycosylation is found at asparagine 51, asparagine 66, asparagine 84, asparagine 104, and asparagine 107. Positions 123–189 (VSIINQVIGW…LFWVPSIKEQ (67 aa)) constitute a PQ-loop 1 domain. A helical membrane pass occupies residues 126-150 (INQVIGWIYFVAWSVSFYPQVITNW). Residues 151–159 (RRKSVVGLS) lie on the Cytoplasmic side of the membrane. The helical transmembrane segment at 160 to 179 (FDFVVLNLMGFVAYSVFNIG) threads the bilayer. Position 166 (asparagine 166) interacts with L-cystine. Topologically, residues 180–202 (LFWVPSIKEQFLLKYPNGVNPVD) are lumenal. The helical transmembrane segment at 203-225 (SNDVFFSLHAVALTLVVIVQCLL) threads the bilayer. H(+) is bound at residue aspartate 205. Residues 226–234 (YERGSQRVS) lie on the Cytoplasmic side of the membrane. Residues 235 to 257 (WLAISFLVLSWLFTLIALIMAAV) form a helical membrane-spanning segment. Over 258-263 (GATTWL) the chain is Lumenal. Residues 263-328 (LQFLFCFSYI…QSYNNDQWTL (66 aa)) form the PQ-loop 2 domain. A helical membrane pass occupies residues 264-289 (QFLFCFSYIKLAVTLVKYFPQAYMNF). The L-cystine site is built by lysine 273, lysine 280, and tyrosine 281. Over 290-298 (HYKSTEGWS) the chain is Cytoplasmic. The chain crosses the membrane as a helical span at residues 299–308 (IGNVLLDFTG). L-cystine is bound by residues asparagine 301 and aspartate 305. Residue aspartate 305 participates in H(+) binding. The Lumenal portion of the chain corresponds to 309–331 (GSFSLLQMFLQSYNNDQWTLIFG). The chain crosses the membrane as a helical span at residues 332-354 (DPTKFGLGIFSIIFDVVFFIQHF). A H(+)-binding site is contributed by aspartate 346. The Cytoplasmic portion of the chain corresponds to 355-367 (CLYRKKPGYDQLN). Residues 362–366 (GYDQL) carry the Lysosomal targeting motif motif.

This sequence belongs to the cystinosin family. In terms of assembly, interacts with components of the V-ATPase complex. Interacts with components of the Ragulator complex. Interacts with RRAGA/RagA and RRAGC/RagC. Interacts with AP-3 complex subunit mu (AP3M1 or AP3M2).

Its subcellular location is the lysosome membrane. It localises to the melanosome membrane. It catalyses the reaction L-cystine(out) + H(+)(out) = L-cystine(in) + H(+)(in). With respect to regulation, switches between a lumen- and a cytosol-open conformation: pH induces conformational changes and shifts the equilibrium to facilitate the transition between the lumen- and cytosol-open conformation, thereby promoting cystine transport. Protonation of specific aspartate residues (Asp-205, Asp-305 and Asp-346) favors the cytosol-open conformation. In terms of biological role, cystine/H(+) symporter that mediates export of cystine, the oxidized dimer of cysteine, from lysosomes. Plays an important role in melanin synthesis by catalyzing cystine export from melanosomes, possibly by inhibiting pheomelanin synthesis. In addition to cystine export, also acts as a positive regulator of mTORC1 signaling in kidney proximal tubular cells, via interactions with components of the v-ATPase and Ragulator complexes. Also involved in small GTPase-regulated vesicle trafficking and lysosomal localization of LAMP2A, independently of cystine transporter activity. In Bos taurus (Bovine), this protein is Cystinosin.